A 170-amino-acid polypeptide reads, in one-letter code: Macro domain-containing protein VPA0103 (170 aa).

Residues 1-170 (MNAISLVQGD…SIWQHALTQH (170 aa)) form the Macro domain.

Belongs to the MacroD-type family.

The protein is Macro domain-containing protein VPA0103 of Vibrio parahaemolyticus serotype O3:K6 (strain RIMD 2210633).